A 68-amino-acid chain; its full sequence is Large ribosomal subunit protein bL35 (68 aa).

This sequence belongs to the bacterial ribosomal protein bL35 family.

This chain is Large ribosomal subunit protein bL35, found in Orientia tsutsugamushi (strain Boryong) (Rickettsia tsutsugamushi).